The primary structure comprises 306 residues: tRNA dimethylallyltransferase (306 aa).

9–16 contacts ATP; that stretch reads GPTGIGKT. A substrate-binding site is contributed by 11-16; the sequence is TGIGKT. The tract at residues 34–37 is interaction with substrate tRNA; the sequence is DSMQ.

The protein belongs to the IPP transferase family. As to quaternary structure, monomer. Mg(2+) is required as a cofactor.

The enzyme catalyses adenosine(37) in tRNA + dimethylallyl diphosphate = N(6)-dimethylallyladenosine(37) in tRNA + diphosphate. Functionally, catalyzes the transfer of a dimethylallyl group onto the adenine at position 37 in tRNAs that read codons beginning with uridine, leading to the formation of N6-(dimethylallyl)adenosine (i(6)A). This Lactobacillus johnsonii (strain CNCM I-12250 / La1 / NCC 533) protein is tRNA dimethylallyltransferase.